Here is a 52-residue protein sequence, read N- to C-terminus: uncharacterized protein (52 aa).

The interval 1-52 (MFGFIYRDPSPAPQGKIRDGSKDPKTPGGGGGGGGGISPNGGAPLGGKGFSM) is disordered. Positions 16–25 (KIRDGSKDPK) are enriched in basic and acidic residues. The span at 27–52 (PGGGGGGGGGISPNGGAPLGGKGFSM) shows a compositional bias: gly residues.

This is an uncharacterized protein from Dictyostelium discoideum (Social amoeba).